We begin with the raw amino-acid sequence, 489 residues long: Bypass of stop codon protein 5 (489 aa).

Residues 1-42 (MQESKEPQNKFEGCQRISSSSSTLFGGTSFEEPRCGTSQGKE) are disordered. Residues 18–30 (SSSSSTLFGGTSF) are compositionally biased toward low complexity. 2 positions are modified to phosphoserine: Ser-111 and Ser-350.

It belongs to the BUL1 family.

Appears to play a role in translation fidelity, and may act when translation is compromised. May be a component of the ubiquitination pathway. The sequence is that of Bypass of stop codon protein 5 (BSC5) from Saccharomyces cerevisiae (strain ATCC 204508 / S288c) (Baker's yeast).